The sequence spans 169 residues: Transcription antitermination protein NusB (169 aa).

The interval 1–20 is disordered; that stretch reads MAESSNKPFRGPVRANDRKA.

The protein belongs to the NusB family.

Its function is as follows. Involved in transcription antitermination. Required for transcription of ribosomal RNA (rRNA) genes. Binds specifically to the boxA antiterminator sequence of the ribosomal RNA (rrn) operons. This Bradyrhizobium sp. (strain BTAi1 / ATCC BAA-1182) protein is Transcription antitermination protein NusB.